The sequence spans 152 residues: Transposase for insertion sequence element IS200 (152 aa).

The Mg(2+) site is built by His-61 and His-63. Tyr-125 acts as the Nucleophile in catalysis. Gln-129 is a binding site for Mg(2+).

Belongs to the transposase 17 family. Homodimer. Mg(2+) is required as a cofactor.

Functionally, transposase responsible for transposition of the IS200 insertion sequence (IS) element. Transposition occurs in 2 main steps, excision from the donor DNA 'top strand' into a single strand circle and its subsequent reinsertion into the DNA target. This increases the copy number of the IS. This chain is Transposase for insertion sequence element IS200 (tnpA1), found in Salmonella typhi.